The following is a 503-amino-acid chain: MKEYKVYLERARSRQQHFLYPLIFREYIYGLAYSHNLNRSIFVENIGYDKKYSLLIVKRLITRMYQQNHLIIWANDSNKNPFWGYKNNYYSQIISEGFAIVVEIPFFLQLSSSLEEEEIIKSYKNLRSIHSIFPFLEDKLTYLNYVSDIRIPYPIHLEILVQILRYWVKDAPFFHFLRLFLWNWNSFITTKKSISTFSKSHRRFFLFLYNFYVCEYESIFVFLRNKSSHLRLKSFSVFFERIFFYAKREHLVKVFAKDFSYTLTFFKDPNIHYVRYQGKCILASKNAPFLMNKWKHFFIHLWQCFFDVWSQPRMININPLSEHSFQLLGYFSNVRLNRSVVRSQMLQNTFLIEIVIKKLDIIVPIIPLIRSLAKAKFCNVLGQPISKPVWADSSDFDIIDRFLGICRNLSHYYNGSSKKKSLYRIKYILRLSCIKTLACKHKSTVRAFLKRSGSEEFLQEFFTEEEEILAFLFPRDSSTLQRLHRNRIWYLDILFSNDLVHDE.

This sequence belongs to the intron maturase 2 family. MatK subfamily.

Its subcellular location is the plastid. It is found in the chloroplast. In terms of biological role, usually encoded in the trnK tRNA gene intron. Probably assists in splicing its own and other chloroplast group II introns. The sequence is that of Maturase K from Vicia faba (Broad bean).